A 300-amino-acid polypeptide reads, in one-letter code: Ribosomal protein bS6--L-glutamate ligase (300 aa).

Residues 104-287 (MQLLARQGID…IAGKMIRWIE (184 aa)) form the ATP-grasp domain. Residues K141, 178 to 179 (EY), D187, and 211 to 213 (RSN) contribute to the ATP site. Mg(2+) is bound by residues D248, E260, and N262. Residues D248, E260, and N262 each contribute to the Mn(2+) site.

The protein belongs to the RimK family. Requires Mg(2+) as cofactor. The cofactor is Mn(2+).

An L-glutamate ligase that catalyzes the ATP-dependent post-translational addition of glutamate residues to the C-terminus of ribosomal protein bS6 (RpsF). Is also able to catalyze the synthesis of poly-alpha-glutamate in vitro, via ATP hydrolysis from unprotected glutamate as substrate. The number of glutamate residues added to either RpsF or to poly-alpha-glutamate changes with pH. The sequence is that of Ribosomal protein bS6--L-glutamate ligase from Escherichia coli O7:K1 (strain IAI39 / ExPEC).